A 190-amino-acid polypeptide reads, in one-letter code: MEKEMEDKEEFDEGEIEYTSYAGEHHLPLIMSLVDQELSEPYSIFTYRYFVYLWPQLCFLAFHKGKCVGTIVCKMGDHRQTFRGYIAMLVVIKPYRGRGIASELVTRAIKAMMESGCEEVTLEAEVSNKGALALYGRLGFIRAKRLYHYYLNGMDAFRLKLLFPKPRVPQIPSQVQTQQEYETFPRPRVP.

The N-acetyltransferase domain maps to 16 to 164; that stretch reads IEYTSYAGEH…DAFRLKLLFP (149 aa).

It belongs to the acetyltransferase family. MAK3 subfamily. As to expression, expressed in roots, leaves, flowers and siliques.

The protein localises to the cytoplasm. The catalysed reaction is N-terminal L-methionyl-L-leucyl-[protein] + acetyl-CoA = N-terminal N(alpha)-acetyl-L-methionyl-L-leucyl-[protein] + CoA + H(+). It carries out the reaction N-terminal L-methionyl-L-isoleucyl-[protein] + acetyl-CoA = N-terminal N(alpha)-acetyl-L-methionyl-L-isoleucyl-[protein] + CoA + H(+). The enzyme catalyses N-terminal L-methionyl-L-phenylalanyl-[protein] + acetyl-CoA = N-terminal N(alpha)-acetyl-L-methionyl-L-phenylalanyl-[protein] + CoA + H(+). It catalyses the reaction N-terminal L-methionyl-L-tryptophyl-[protein] + acetyl-CoA = N-terminal N(alpha)-acetyl-L-methionyl-L-tryptophyl-[protein] + CoA + H(+). The catalysed reaction is N-terminal L-methionyl-L-tyrosyl-[protein] + acetyl-CoA = N-terminal N(alpha)-acetyl-L-methionyl-L-tyrosyl-[protein] + CoA + H(+). Probably required for N-acetylation of some chloroplast precursor proteins and efficient accumulation of thylakoid multiprotein complexes. In yeast, can replace the NatC complex (composed of MAK3, MAK10 and MAK31) by acetylating N termini of endogenous proteins and the N-terminus Met of L-A virus Gag protein. However, the formation of a NatC complex is not required for this function. In Arabidopsis thaliana (Mouse-ear cress), this protein is N-alpha-acetyltransferase MAK3 (MAK3).